We begin with the raw amino-acid sequence, 126 residues long: Large ribosomal subunit protein bL17 (126 aa).

This sequence belongs to the bacterial ribosomal protein bL17 family. As to quaternary structure, part of the 50S ribosomal subunit. Contacts protein L32.

The chain is Large ribosomal subunit protein bL17 from Vibrio parahaemolyticus serotype O3:K6 (strain RIMD 2210633).